We begin with the raw amino-acid sequence, 265 residues long: Tryptophan synthase alpha chain (265 aa).

Residues Glu49 and Asp60 each act as proton acceptor in the active site.

Belongs to the TrpA family. In terms of assembly, tetramer of two alpha and two beta chains.

The enzyme catalyses (1S,2R)-1-C-(indol-3-yl)glycerol 3-phosphate + L-serine = D-glyceraldehyde 3-phosphate + L-tryptophan + H2O. It functions in the pathway amino-acid biosynthesis; L-tryptophan biosynthesis; L-tryptophan from chorismate: step 5/5. In terms of biological role, the alpha subunit is responsible for the aldol cleavage of indoleglycerol phosphate to indole and glyceraldehyde 3-phosphate. This Polynucleobacter asymbioticus (strain DSM 18221 / CIP 109841 / QLW-P1DMWA-1) (Polynucleobacter necessarius subsp. asymbioticus) protein is Tryptophan synthase alpha chain.